We begin with the raw amino-acid sequence, 448 residues long: Trigger factor (448 aa).

One can recognise a PPIase FKBP-type domain in the interval Gly-161–Pro-246. Residues Ala-428–Ala-448 form a disordered region. Positions Gly-437 to Ala-448 are enriched in acidic residues.

This sequence belongs to the FKBP-type PPIase family. Tig subfamily.

Its subcellular location is the cytoplasm. The catalysed reaction is [protein]-peptidylproline (omega=180) = [protein]-peptidylproline (omega=0). In terms of biological role, involved in protein export. Acts as a chaperone by maintaining the newly synthesized protein in an open conformation. Functions as a peptidyl-prolyl cis-trans isomerase. The sequence is that of Trigger factor from Chromohalobacter salexigens (strain ATCC BAA-138 / DSM 3043 / CIP 106854 / NCIMB 13768 / 1H11).